Reading from the N-terminus, the 290-residue chain is ATP synthase gamma chain (290 aa).

Belongs to the ATPase gamma chain family. As to quaternary structure, F-type ATPases have 2 components, CF(1) - the catalytic core - and CF(0) - the membrane proton channel. CF(1) has five subunits: alpha(3), beta(3), gamma(1), delta(1), epsilon(1). CF(0) has three main subunits: a, b and c.

The protein localises to the cell inner membrane. In terms of biological role, produces ATP from ADP in the presence of a proton gradient across the membrane. The gamma chain is believed to be important in regulating ATPase activity and the flow of protons through the CF(0) complex. The sequence is that of ATP synthase gamma chain from Thiobacillus denitrificans (strain ATCC 25259 / T1).